Here is a 585-residue protein sequence, read N- to C-terminus: Chaperonin CPN60-like 1, mitochondrial (585 aa).

A mitochondrion-targeting transit peptide spans 1–32 (MYRLVSNVASKARIARKCTSQIGSRLNSTRNY).

This sequence belongs to the chaperonin (HSP60) family.

Its subcellular location is the mitochondrion. Its function is as follows. Implicated in mitochondrial protein import and macromolecular assembly. May facilitate the correct folding of imported proteins. May also prevent misfolding and promote the refolding and proper assembly of unfolded polypeptides generated under stress conditions in the mitochondrial matrix. The chain is Chaperonin CPN60-like 1, mitochondrial from Arabidopsis thaliana (Mouse-ear cress).